We begin with the raw amino-acid sequence, 633 residues long: Protein BZZ1 (633 aa).

An F-BAR domain is found at 5–271 (LSIGNEIKDS…VVKQNKPSLN (267 aa)). The stretch at 138-210 (DMVNKKDNIY…INQANRTKDK (73 aa)) forms a coiled coil. 4 positions are modified to phosphoserine: serine 327, serine 463, serine 472, and serine 476. Residues 429–495 (VDSKPSSGGS…KKTTQNSSDD (67 aa)) are disordered. Residues 474–493 (NNSIRTTSTNNTKKTTQNSS) are compositionally biased toward low complexity. SH3 domains follow at residues 493–555 (SDDG…ISSA) and 577–633 (LPVR…SYCK).

It belongs to the BZZ1 family. In terms of assembly, interacts with LAS17 and MYO5.

The protein localises to the cytoplasm. It localises to the cytoskeleton. It is found in the actin patch. Functionally, plays a role in endocytosis and trafficking to the vacuole. Functions with type I myosins to restore polarity of the actin cytoskeleton after NaCl stress. The protein is Protein BZZ1 (BZZ1) of Saccharomyces cerevisiae (strain ATCC 204508 / S288c) (Baker's yeast).